The following is a 123-amino-acid chain: Large ribosomal subunit protein bL12 (123 aa).

It belongs to the bacterial ribosomal protein bL12 family. As to quaternary structure, homodimer. Part of the ribosomal stalk of the 50S ribosomal subunit. Forms a multimeric L10(L12)X complex, where L10 forms an elongated spine to which 2 to 4 L12 dimers bind in a sequential fashion. Binds GTP-bound translation factors.

Functionally, forms part of the ribosomal stalk which helps the ribosome interact with GTP-bound translation factors. Is thus essential for accurate translation. This is Large ribosomal subunit protein bL12 from Roseobacter denitrificans (strain ATCC 33942 / OCh 114) (Erythrobacter sp. (strain OCh 114)).